A 152-amino-acid polypeptide reads, in one-letter code: UPF0266 membrane protein YobD (152 aa).

The next 3 helical transmembrane spans lie at 6–26 (LVLI…QFIM), 45–65 (VDSV…VTSH), and 67–87 (AQMT…IFWI).

Belongs to the UPF0266 family.

Its subcellular location is the cell inner membrane. The sequence is that of UPF0266 membrane protein YobD from Salmonella paratyphi B (strain ATCC BAA-1250 / SPB7).